The following is a 296-amino-acid chain: Bifunctional protein FolD (296 aa).

Residues 166–168 (GRS), S191, and I232 contribute to the NADP(+) site.

It belongs to the tetrahydrofolate dehydrogenase/cyclohydrolase family. As to quaternary structure, homodimer.

It carries out the reaction (6R)-5,10-methylene-5,6,7,8-tetrahydrofolate + NADP(+) = (6R)-5,10-methenyltetrahydrofolate + NADPH. The catalysed reaction is (6R)-5,10-methenyltetrahydrofolate + H2O = (6R)-10-formyltetrahydrofolate + H(+). The protein operates within one-carbon metabolism; tetrahydrofolate interconversion. Its function is as follows. Catalyzes the oxidation of 5,10-methylenetetrahydrofolate to 5,10-methenyltetrahydrofolate and then the hydrolysis of 5,10-methenyltetrahydrofolate to 10-formyltetrahydrofolate. This is Bifunctional protein FolD from Cereibacter sphaeroides (strain ATCC 17025 / ATH 2.4.3) (Rhodobacter sphaeroides).